We begin with the raw amino-acid sequence, 493 residues long: MENKLTIYNTLSRQKELFVPLHAPHVGMYVCGPTVYGDAHLGHARPAITFDILFRYLTHLGYKVRYVRNITDVGHLEHDADEGEDKIAKKARLEQLEPMEVVQYYLNRYHKAMEALNVLPPSIEPHASGHIIEQIELVEEILKNGYAYESEGSVYFDVAKYNKDHHYGKLSGRNLDDVLNTTRELDGQSEKRNPADFALWKCAQPEHIMRWPSPWSNGFPGWHCECTAMGKKYLGEHFDIHGGGMDLIFPHHECEIAQSVASQGDDMVHYWMHNNMITINGQKMGKSYGNFINLDEFFHGTHKLLTQAYSPMTIRFFILQAHYRSTVDFSNEALQAAEKGLERLTEAVKGLERITPATQTTGIEGVKDLREKCYTAMNDDLNSPIVIAHLFDGARMINTVLDKKATISAEDLEELKSMFHLFMYEILGLKEEAANNEAHEEAYGKVVDMLLEQRMKAKANKDWATSDKIRDELAALGFEVKDTKDGFTWKLNK.

Cys31 contacts Zn(2+). A 'HIGH' region motif is present at residues 33-43 (PTVYGDAHLGH). 3 residues coordinate Zn(2+): Cys226, His251, and Glu255. The 'KMSKS' region motif lies at 283–287 (KMGKS). Lys286 is an ATP binding site.

Belongs to the class-I aminoacyl-tRNA synthetase family. As to quaternary structure, monomer. Requires Zn(2+) as cofactor.

It localises to the cytoplasm. The catalysed reaction is tRNA(Cys) + L-cysteine + ATP = L-cysteinyl-tRNA(Cys) + AMP + diphosphate. The sequence is that of Cysteine--tRNA ligase from Phocaeicola vulgatus (strain ATCC 8482 / DSM 1447 / JCM 5826 / CCUG 4940 / NBRC 14291 / NCTC 11154) (Bacteroides vulgatus).